A 154-amino-acid chain; its full sequence is UPF0225 protein YPDSF_0962 (154 aa).

This sequence belongs to the UPF0225 family.

This Yersinia pestis (strain Pestoides F) protein is UPF0225 protein YPDSF_0962.